A 262-amino-acid chain; its full sequence is Hydroxyethylthiazole kinase (262 aa).

M43 contacts substrate. Residues R118 and T164 each contribute to the ATP site. Residue A191 coordinates substrate.

The protein belongs to the Thz kinase family. Requires Mg(2+) as cofactor.

It carries out the reaction 5-(2-hydroxyethyl)-4-methylthiazole + ATP = 4-methyl-5-(2-phosphooxyethyl)-thiazole + ADP + H(+). Its pathway is cofactor biosynthesis; thiamine diphosphate biosynthesis; 4-methyl-5-(2-phosphoethyl)-thiazole from 5-(2-hydroxyethyl)-4-methylthiazole: step 1/1. Catalyzes the phosphorylation of the hydroxyl group of 4-methyl-5-beta-hydroxyethylthiazole (THZ). This chain is Hydroxyethylthiazole kinase, found in Cereibacter sphaeroides (strain ATCC 17025 / ATH 2.4.3) (Rhodobacter sphaeroides).